The sequence spans 312 residues: Pantothenate kinase (312 aa).

97-104 (GSVAVGKS) serves as a coordination point for ATP.

The protein belongs to the prokaryotic pantothenate kinase family.

The protein localises to the cytoplasm. It carries out the reaction (R)-pantothenate + ATP = (R)-4'-phosphopantothenate + ADP + H(+). Its pathway is cofactor biosynthesis; coenzyme A biosynthesis; CoA from (R)-pantothenate: step 1/5. The protein is Pantothenate kinase of Corynebacterium glutamicum (strain ATCC 13032 / DSM 20300 / JCM 1318 / BCRC 11384 / CCUG 27702 / LMG 3730 / NBRC 12168 / NCIMB 10025 / NRRL B-2784 / 534).